Consider the following 306-residue polypeptide: Lipid A biosynthesis lauroyltransferase (306 aa).

A helical membrane pass occupies residues 17-37 (WLTWLGIGVLWLVVQLPYPVI). Positions 132 to 137 (HFLTLE) match the HXXXXD motif motif.

The protein belongs to the LpxL/LpxM/LpxP family. As to quaternary structure, monomer.

Its subcellular location is the cell inner membrane. It carries out the reaction dodecanoyl-[ACP] + alpha-Kdo-(2-&gt;4)-alpha-Kdo-(2-&gt;6)-lipid IVA (E. coli) = alpha-Kdo-(2-&gt;4)-alpha-Kdo-(2-&gt;6)-(dodecanoyl)-lipid IVA (E. coli) + holo-[ACP]. It functions in the pathway glycolipid biosynthesis; KDO(2)-lipid A biosynthesis; KDO(2)-lipid A from CMP-3-deoxy-D-manno-octulosonate and lipid IV(A): step 3/4. Its pathway is bacterial outer membrane biogenesis; lipopolysaccharide biosynthesis. Catalyzes the transfer of laurate from lauroyl-[acyl-carrier-protein] (ACP) to Kdo(2)-lipid IV(A) to form Kdo(2)-(lauroyl)-lipid IV(A). Has 10 fold selectivity for lauroyl-ACP over myristoyl-ACP. In vitro, can also catalyze a slow second acylation reaction leading to the formation of Kdo(2)-(dilauroyl)-lipid IV(A). This chain is Lipid A biosynthesis lauroyltransferase, found in Escherichia coli (strain K12).